The primary structure comprises 235 residues: Octanoyltransferase (235 aa).

A BPL/LPL catalytic domain is found at 44-231; it reads DTTADELWLV…HQVGLPNENN (188 aa). Residues 83 to 90, 150 to 152, and 163 to 165 contribute to the substrate site; these read RGGQVTYH, SLG, and GLA. Residue cysteine 181 is the Acyl-thioester intermediate of the active site.

Belongs to the LipB family.

The protein localises to the cytoplasm. The catalysed reaction is octanoyl-[ACP] + L-lysyl-[protein] = N(6)-octanoyl-L-lysyl-[protein] + holo-[ACP] + H(+). It participates in protein modification; protein lipoylation via endogenous pathway; protein N(6)-(lipoyl)lysine from octanoyl-[acyl-carrier-protein]: step 1/2. Functionally, catalyzes the transfer of endogenously produced octanoic acid from octanoyl-acyl-carrier-protein onto the lipoyl domains of lipoate-dependent enzymes. Lipoyl-ACP can also act as a substrate although octanoyl-ACP is likely to be the physiological substrate. This Colwellia psychrerythraea (strain 34H / ATCC BAA-681) (Vibrio psychroerythus) protein is Octanoyltransferase.